A 287-amino-acid chain; its full sequence is Bifunctional protein FolD (287 aa).

NADP(+) contacts are provided by residues 160-162 (GRS), Ser-189, and Thr-230.

The protein belongs to the tetrahydrofolate dehydrogenase/cyclohydrolase family. Homodimer.

The enzyme catalyses (6R)-5,10-methylene-5,6,7,8-tetrahydrofolate + NADP(+) = (6R)-5,10-methenyltetrahydrofolate + NADPH. It carries out the reaction (6R)-5,10-methenyltetrahydrofolate + H2O = (6R)-10-formyltetrahydrofolate + H(+). The protein operates within one-carbon metabolism; tetrahydrofolate interconversion. Functionally, catalyzes the oxidation of 5,10-methylenetetrahydrofolate to 5,10-methenyltetrahydrofolate and then the hydrolysis of 5,10-methenyltetrahydrofolate to 10-formyltetrahydrofolate. The chain is Bifunctional protein FolD from Chlamydia abortus (strain DSM 27085 / S26/3) (Chlamydophila abortus).